The chain runs to 150 residues: Anti-sigma F factor (150 aa).

Belongs to the anti-sigma-factor family.

It carries out the reaction L-seryl-[protein] + ATP = O-phospho-L-seryl-[protein] + ADP + H(+). The enzyme catalyses L-threonyl-[protein] + ATP = O-phospho-L-threonyl-[protein] + ADP + H(+). Its function is as follows. Binds to sigma F and blocks its ability to form an RNA polymerase holoenzyme (E-sigma F). Phosphorylates SpoIIAA on a serine residue. This phosphorylation may enable SpoIIAA to act as an anti-anti-sigma factor that counteracts SpoIIAB and thus releases sigma F from inhibition. The protein is Anti-sigma F factor of Pasteuria penetrans.